Consider the following 299-residue polypeptide: Putative peptidyl-prolyl cis-trans isomerase HP_0175 (299 aa).

Residues 1 to 21 form the signal peptide; the sequence is MKKNILNLALVGALSTSFLMA. Positions 154 to 253 constitute a PpiC domain; sequence KQEAHARHIL…FGYHIIYLIS (100 aa).

It carries out the reaction [protein]-peptidylproline (omega=180) = [protein]-peptidylproline (omega=0). In Helicobacter pylori (strain ATCC 700392 / 26695) (Campylobacter pylori), this protein is Putative peptidyl-prolyl cis-trans isomerase HP_0175.